Consider the following 299-residue polypeptide: Ectoine dioxygenase (299 aa).

A disordered region spans residues 1-40; sequence MTTTTTNVTDLYPTRGATEVATPRQDPVVWGSPDAPGPVS. Glutamine 133 provides a ligand contact to L-ectoine. Residue lysine 139 coordinates 2-oxoglutarate. Residues histidine 150, aspartate 152, and histidine 251 each coordinate Fe cation.

The protein belongs to the PhyH family. EctD subfamily. In terms of assembly, homodimer. Requires Fe(2+) as cofactor.

The catalysed reaction is L-ectoine + 2-oxoglutarate + O2 = 5-hydroxyectoine + succinate + CO2. In terms of biological role, involved in the biosynthesis of 5-hydroxyectoine, called compatible solute, which helps organisms to survive extreme osmotic stress by acting as a highly soluble organic osmolyte. Catalyzes the 2-oxoglutarate-dependent selective hydroxylation of L-ectoine to yield (4S,5S)-5-hydroxyectoine. The polypeptide is Ectoine dioxygenase (Streptomyces coelicolor (strain ATCC BAA-471 / A3(2) / M145)).